Reading from the N-terminus, the 166-residue chain is Large ribosomal subunit protein bL9 (166 aa).

It belongs to the bacterial ribosomal protein bL9 family.

Its function is as follows. Binds to the 23S rRNA. The sequence is that of Large ribosomal subunit protein bL9 from Psychrobacter arcticus (strain DSM 17307 / VKM B-2377 / 273-4).